The following is a 299-amino-acid chain: 4-diphosphocytidyl-2-C-methyl-D-erythritol kinase (299 aa).

The active site involves Lys17. Position 103–113 (Pro103–Gly113) interacts with ATP. The active site involves Asp145.

It belongs to the GHMP kinase family. IspE subfamily.

It carries out the reaction 4-CDP-2-C-methyl-D-erythritol + ATP = 4-CDP-2-C-methyl-D-erythritol 2-phosphate + ADP + H(+). Its pathway is isoprenoid biosynthesis; isopentenyl diphosphate biosynthesis via DXP pathway; isopentenyl diphosphate from 1-deoxy-D-xylulose 5-phosphate: step 3/6. Its function is as follows. Catalyzes the phosphorylation of the position 2 hydroxy group of 4-diphosphocytidyl-2C-methyl-D-erythritol. In Bartonella tribocorum (strain CIP 105476 / IBS 506), this protein is 4-diphosphocytidyl-2-C-methyl-D-erythritol kinase.